Reading from the N-terminus, the 426-residue chain is Histidine--tRNA ligase (426 aa).

This sequence belongs to the class-II aminoacyl-tRNA synthetase family.

It localises to the cytoplasm. The catalysed reaction is tRNA(His) + L-histidine + ATP = L-histidyl-tRNA(His) + AMP + diphosphate + H(+). This Saccharolobus solfataricus (strain ATCC 35092 / DSM 1617 / JCM 11322 / P2) (Sulfolobus solfataricus) protein is Histidine--tRNA ligase.